We begin with the raw amino-acid sequence, 935 residues long: 2-oxoglutarate dehydrogenase E1 component (935 aa).

This sequence belongs to the alpha-ketoglutarate dehydrogenase family. In terms of assembly, homodimer. Part of the 2-oxoglutarate dehydrogenase (OGDH) complex composed of E1 (2-oxoglutarate dehydrogenase), E2 (dihydrolipoamide succinyltransferase) and E3 (dihydrolipoamide dehydrogenase); the complex contains multiple copies of the three enzymatic components (E1, E2 and E3). The cofactor is thiamine diphosphate.

The enzyme catalyses N(6)-[(R)-lipoyl]-L-lysyl-[protein] + 2-oxoglutarate + H(+) = N(6)-[(R)-S(8)-succinyldihydrolipoyl]-L-lysyl-[protein] + CO2. E1 component of the 2-oxoglutarate dehydrogenase (OGDH) complex which catalyzes the decarboxylation of 2-oxoglutarate, the first step in the conversion of 2-oxoglutarate to succinyl-CoA and CO(2). The sequence is that of 2-oxoglutarate dehydrogenase E1 component (sucA) from Haemophilus influenzae (strain ATCC 51907 / DSM 11121 / KW20 / Rd).